A 288-amino-acid polypeptide reads, in one-letter code: Protease HtpX homolog (288 aa).

The next 2 membrane-spanning stretches (helical) occupy residues 6–26 (TAFL…YVGG) and 28–48 (QGMM…YFFS). Zn(2+) is bound at residue H130. E131 is a catalytic residue. A Zn(2+)-binding site is contributed by H134. A run of 2 helical transmembrane segments spans residues 140–160 (ILTG…ANFA) and 179–199 (VIML…QMAI). E204 contacts Zn(2+).

It belongs to the peptidase M48B family. Requires Zn(2+) as cofactor.

The protein localises to the cell inner membrane. This is Protease HtpX homolog from Campylobacter concisus (strain 13826).